The following is a 640-amino-acid chain: MVPAGLCAYRDLRRKRARKWGDTVTQPDDPRRVGVIVELIDHTIAIAKLNERGDLVQRLTRARQRITDPQVRVVIAGLLKQGKSQLLNSLLNLPAARVGDDEATVVITVVSYSAQPSARLVLAAGPDGTTAAVDIPVDDISTDVRRAPHAGGREVLRVEVGAPSPLLRGGLAFIDTPGVGGLGQPHLSATLGLLPEADAVLVVSDTSQEFTEPEMWFVRQAHQICPVGAVVATKTDLYPRWREIVNANAAHLQRARVPMPIIAVSSLLRSHAVTLNDKELNEESNFPAIVKFLSEQVLSRATERVRAGVLGEIRSATEQLAVSLGSELSVVNDPNLRDRLASDLERRKREAQQAVQQTALWQQVLGDGFNDLTADVDHDLRTRFRTVTEDAERQIDSCDPTAHWAEIGNDVENAIATAVGDNFVWAYQRSEALADDVARSFADAGLDSVLSAELSPHVMGTDFGRLKALGRMESKPLRRGHKMIIGMRGSYGGVVMIGMLSSVVGLGLFNPLSVGAGLILGRMAYKEDKQNRLLRVRSEAKANVRRFVDDISFVVSKQSRDRLKMIQRLLRDHYREIAEEITRSLTESLQATIAAAQVAETERDNRIRELQRQLGILSQVNDNLAGLEPTLTPRASLGRA.

A helical transmembrane segment spans residues 497–519 (IGMLSSVVGLGLFNPLSVGAGLI). Positions 560 to 628 (RDRLKMIQRL…QVNDNLAGLE (69 aa)) form a coiled coil.

Forms multimeric structures containing a central pore.

The protein resides in the cell membrane. Its function is as follows. Participates in the development of tolerance to both isoniazid and ethambutol. May function through a MDR-pump like mechanism, although it does not appear to directly transport isoniazid from the cell. This chain is Isoniazid-induced protein IniA (iniA), found in Mycobacterium tuberculosis (strain CDC 1551 / Oshkosh).